The sequence spans 715 residues: Putative membrane protein IgaA homolog (715 aa).

A run of 5 helical transmembrane segments spans residues 2–22 (STIVLILALLLTSLIAVGLLW), 214–234 (EACAICIALLLLFFALSGPTV), 235–255 (TLPWLVIVAVSLTCWACWYLF), 349–369 (NLTLIVGSLLVLVLLLIYVPL), and 663–683 (ATSLLLLVLIFCLVVNMVLLI).

It belongs to the IgaA family.

It is found in the cell inner membrane. In Yersinia pestis, this protein is Putative membrane protein IgaA homolog.